The chain runs to 421 residues: Functional amyloid transporter FapF (421 aa).

The N-terminal stretch at M1–A24 is a signal peptide. Residues Q23–Q64 are a coiled coil.

This sequence belongs to the amyloid transporter (TC 9.B.153) family.

It is found in the secreted. The protein localises to the cell surface. Its subcellular location is the cell outer membrane. Its function is as follows. Transports fibril components across the outer membrane. Upon overexpression of the endogenous six-gene locus (fapA-fapF), cells form large clumps during liquid growth, make large amounts of biofilm and produce amyloid fibrils. The protein is Functional amyloid transporter FapF of Pseudomonas aeruginosa (strain ATCC 15692 / DSM 22644 / CIP 104116 / JCM 14847 / LMG 12228 / 1C / PRS 101 / PAO1).